Here is a 125-residue protein sequence, read N- to C-terminus: CLAVATA3/ESR (CLE)-related protein ESR3 (125 aa).

The N-terminal stretch at 1–26 is a signal peptide; the sequence is MASRMGMVAIMSLFVYAIVVPTSVNA. The disordered stretch occupies residues 45 to 125; it reads QQQGGFIGHR…IGPPPLPDRY (81 aa). A hydroxyproline mark is found at Pro75 and Pro78. Pro78 is a glycosylation site (O-linked (Ara...) hydroxyproline).

Belongs to the CLV3/ESR signal peptide family. The O-glycosylation (arabinosylation) of the hydroxyproline Pro-78 enhances binding affinity of the ESR3p peptide for its receptor. In terms of tissue distribution, seed endosperm.

It localises to the secreted. The protein localises to the extracellular space. Functionally, extracellular signal peptide that regulates cell fate. The protein is CLAVATA3/ESR (CLE)-related protein ESR3 of Zea mays (Maize).